A 144-amino-acid polypeptide reads, in one-letter code: Superoxide dismutase [Mn] 1 (144 aa).

Residues His42, Asp124, and His128 each contribute to the Mn(2+) site.

It belongs to the iron/manganese superoxide dismutase family. Requires Mn(2+) as cofactor.

The enzyme catalyses 2 superoxide + 2 H(+) = H2O2 + O2. Destroys superoxide anion radicals which are normally produced within the cells and which are toxic to biological systems. The chain is Superoxide dismutase [Mn] 1 (sod1) from Haloferax mediterranei (Halobacterium mediterranei).